Consider the following 465-residue polypeptide: UDP-N-acetylmuramoylalanine--D-glutamate ligase (465 aa).

124–130 (GSDGKTT) provides a ligand contact to ATP.

It belongs to the MurCDEF family.

The protein resides in the cytoplasm. It catalyses the reaction UDP-N-acetyl-alpha-D-muramoyl-L-alanine + D-glutamate + ATP = UDP-N-acetyl-alpha-D-muramoyl-L-alanyl-D-glutamate + ADP + phosphate + H(+). It functions in the pathway cell wall biogenesis; peptidoglycan biosynthesis. Its function is as follows. Cell wall formation. Catalyzes the addition of glutamate to the nucleotide precursor UDP-N-acetylmuramoyl-L-alanine (UMA). The protein is UDP-N-acetylmuramoylalanine--D-glutamate ligase of Ruminiclostridium cellulolyticum (strain ATCC 35319 / DSM 5812 / JCM 6584 / H10) (Clostridium cellulolyticum).